A 94-amino-acid chain; its full sequence is Ribonuclease P protein component 1 (94 aa).

Belongs to the eukaryotic/archaeal RNase P protein component 1 family. Consists of a catalytic RNA component and at least 4-5 protein subunits.

Its subcellular location is the cytoplasm. The catalysed reaction is Endonucleolytic cleavage of RNA, removing 5'-extranucleotides from tRNA precursor.. Its function is as follows. Part of ribonuclease P, a protein complex that generates mature tRNA molecules by cleaving their 5'-ends. The protein is Ribonuclease P protein component 1 of Haloarcula marismortui (strain ATCC 43049 / DSM 3752 / JCM 8966 / VKM B-1809) (Halobacterium marismortui).